Reading from the N-terminus, the 248-residue chain is DNA repair protein RecO (248 aa).

Belongs to the RecO family.

In terms of biological role, involved in DNA repair and RecF pathway recombination. In Streptomyces avermitilis (strain ATCC 31267 / DSM 46492 / JCM 5070 / NBRC 14893 / NCIMB 12804 / NRRL 8165 / MA-4680), this protein is DNA repair protein RecO.